The primary structure comprises 419 residues: Phospho-N-acetylmuramoyl-pentapeptide-transferase (419 aa).

10 helical membrane passes run 22 to 42 (YVSFRSGLALILSLFISTAIG), 72 to 92 (TPTMGGIIIIIAILIPTLLCA), 94 to 114 (LNNIYVILMLVTTVWLGALGF), 135 to 155 (IVGQVGLGLIVGLVLFMSPDV), 210 to 230 (AAWLVFVLMVIFVVTAVSNGA), 238 to 258 (GLAAGTSAIIGVALGILAYMS), 266 to 286 (FLNIMFIPGAEELVVYAAAFI), 303 to 323 (FMGDTGSLTLGGIIAVFAIII), 327 to 347 (LLIPILCGIFLVENISVMLQV), and 396 to 416 (KIVVRFWLIGIILAVMTIVTL).

Belongs to the glycosyltransferase 4 family. MraY subfamily. It depends on Mg(2+) as a cofactor.

It is found in the cell inner membrane. The catalysed reaction is UDP-N-acetyl-alpha-D-muramoyl-L-alanyl-gamma-D-glutamyl-meso-2,6-diaminopimeloyl-D-alanyl-D-alanine + di-trans,octa-cis-undecaprenyl phosphate = di-trans,octa-cis-undecaprenyl diphospho-N-acetyl-alpha-D-muramoyl-L-alanyl-D-glutamyl-meso-2,6-diaminopimeloyl-D-alanyl-D-alanine + UMP. Its pathway is cell wall biogenesis; peptidoglycan biosynthesis. Its function is as follows. Catalyzes the initial step of the lipid cycle reactions in the biosynthesis of the cell wall peptidoglycan: transfers peptidoglycan precursor phospho-MurNAc-pentapeptide from UDP-MurNAc-pentapeptide onto the lipid carrier undecaprenyl phosphate, yielding undecaprenyl-pyrophosphoryl-MurNAc-pentapeptide, known as lipid I. This chain is Phospho-N-acetylmuramoyl-pentapeptide-transferase, found in Parabacteroides distasonis (strain ATCC 8503 / DSM 20701 / CIP 104284 / JCM 5825 / NCTC 11152).